Here is a 160-residue protein sequence, read N- to C-terminus: Cyanate hydratase (160 aa).

Active-site residues include arginine 100, glutamate 103, and serine 126.

Belongs to the cyanase family.

The enzyme catalyses cyanate + hydrogencarbonate + 3 H(+) = NH4(+) + 2 CO2. Its function is as follows. Catalyzes the reaction of cyanate with bicarbonate to produce ammonia and carbon dioxide. This is Cyanate hydratase from Aspergillus oryzae (strain ATCC 42149 / RIB 40) (Yellow koji mold).